Here is a 484-residue protein sequence, read N- to C-terminus: Protein nucleotidyltransferase YdiU (484 aa).

Gly-87, Gly-89, Arg-90, Lys-110, Asp-122, Gly-123, Arg-173, and Arg-180 together coordinate ATP. Asp-249 acts as the Proton acceptor in catalysis. Mg(2+) contacts are provided by Asn-250 and Asp-259. An ATP-binding site is contributed by Asp-259.

This sequence belongs to the SELO family. Mg(2+) serves as cofactor. Mn(2+) is required as a cofactor.

The enzyme catalyses L-seryl-[protein] + ATP = 3-O-(5'-adenylyl)-L-seryl-[protein] + diphosphate. It catalyses the reaction L-threonyl-[protein] + ATP = 3-O-(5'-adenylyl)-L-threonyl-[protein] + diphosphate. The catalysed reaction is L-tyrosyl-[protein] + ATP = O-(5'-adenylyl)-L-tyrosyl-[protein] + diphosphate. It carries out the reaction L-histidyl-[protein] + UTP = N(tele)-(5'-uridylyl)-L-histidyl-[protein] + diphosphate. The enzyme catalyses L-seryl-[protein] + UTP = O-(5'-uridylyl)-L-seryl-[protein] + diphosphate. It catalyses the reaction L-tyrosyl-[protein] + UTP = O-(5'-uridylyl)-L-tyrosyl-[protein] + diphosphate. Its function is as follows. Nucleotidyltransferase involved in the post-translational modification of proteins. It can catalyze the addition of adenosine monophosphate (AMP) or uridine monophosphate (UMP) to a protein, resulting in modifications known as AMPylation and UMPylation. The protein is Protein nucleotidyltransferase YdiU of Alcanivorax borkumensis (strain ATCC 700651 / DSM 11573 / NCIMB 13689 / SK2).